We begin with the raw amino-acid sequence, 347 residues long: Dihydroorotase (347 aa).

Zn(2+)-binding residues include His17 and His19. Substrate contacts are provided by residues 19 to 21 (HLR) and Asn45. Positions 103, 140, and 178 each coordinate Zn(2+). Lys103 is subject to N6-carboxylysine. Residue His140 participates in substrate binding. A substrate-binding site is contributed by Leu223. Position 251 (Asp251) interacts with Zn(2+). Asp251 is a catalytic residue. Substrate-binding residues include His255 and Ala267.

This sequence belongs to the metallo-dependent hydrolases superfamily. DHOase family. Class II DHOase subfamily. Homodimer. Zn(2+) serves as cofactor.

The enzyme catalyses (S)-dihydroorotate + H2O = N-carbamoyl-L-aspartate + H(+). It participates in pyrimidine metabolism; UMP biosynthesis via de novo pathway; (S)-dihydroorotate from bicarbonate: step 3/3. Its function is as follows. Catalyzes the reversible cyclization of carbamoyl aspartate to dihydroorotate. The chain is Dihydroorotase from Pectobacterium atrosepticum (strain SCRI 1043 / ATCC BAA-672) (Erwinia carotovora subsp. atroseptica).